The sequence spans 220 residues: Large ribosomal subunit protein uL3 (220 aa).

Residues 137–159 (GASHGAHKNHRKPGSIGGASTPS) are disordered.

It belongs to the universal ribosomal protein uL3 family. Part of the 50S ribosomal subunit. Forms a cluster with proteins L14 and L19.

One of the primary rRNA binding proteins, it binds directly near the 3'-end of the 23S rRNA, where it nucleates assembly of the 50S subunit. The chain is Large ribosomal subunit protein uL3 from Renibacterium salmoninarum (strain ATCC 33209 / DSM 20767 / JCM 11484 / NBRC 15589 / NCIMB 2235).